Consider the following 734-residue polypeptide: MNTSLRLNHYWITCADGLETLLQEEIEQLGTKVTERKAGRLIIEGTLEHAYRICMWSRLASRVLLPIHTYELERTHDARDVAEELYEGAISFDWSLIFAPQSTFAIRLHAEREIKVNTQFATLRVKDGVVDSFMEAVGRRPSIDTKQPEITLYVLAGKTEHTYCLDLSGDSLHKRGYRRFMTDAPIKENLAAAILQKAKLQERNPEIVLDPMCGSGTFIIEALMILTDRAPGLVRRFGFNGWHGHDRELWLSLKAEAAERHEKALEQPLPKFYAYDADWEAVKATRENIIAAGFEKLLGDIQIEERTLADWPDFGAENKTAFIVTNPPYGERLGDKASNRSLYLGLSALLQKNFPNQYAAIIAAQIEQADVLAFEAPETLRLMNGKLPIYVRFGTVKLEKVTQPFLANWQAQPVEMEEAQDFANRLQKNMTALKKWATKENIYCLRLYDADLPDFNLAVDLYSDRLHVQEYAPPKKIDPEKAKKRFNLALAAIRAVTGLNRDAIFIKTRARQTGTNQYTKQSTANKRFIVQEGKAKILVNLTDYLDTGLFLDHRQMRLRIAQEARGKHFLNLYSYTSTASLHAALGGAASTTSVDLSNTYLSWSKENFVLNGLTVDHADEQHMFFASDCFEWLKEGHEQYDLIFIDPPTFSNSKKFHGTFDVQRDHVSLIKRAMNRLTSEGTLYFSNNYRGFEMDEEIEALYDVEEITSETIGPDFKRNQKIHRAWKIQHPGLN.

The region spanning 49–167 (HAYRICMWSR…KTEHTYCLDL (119 aa)) is the THUMP domain.

It belongs to the methyltransferase superfamily. RlmKL family.

The protein localises to the cytoplasm. It carries out the reaction guanosine(2445) in 23S rRNA + S-adenosyl-L-methionine = N(2)-methylguanosine(2445) in 23S rRNA + S-adenosyl-L-homocysteine + H(+). It catalyses the reaction guanosine(2069) in 23S rRNA + S-adenosyl-L-methionine = N(2)-methylguanosine(2069) in 23S rRNA + S-adenosyl-L-homocysteine + H(+). Specifically methylates the guanine in position 2445 (m2G2445) and the guanine in position 2069 (m7G2069) of 23S rRNA. This is Ribosomal RNA large subunit methyltransferase K/L from Acinetobacter baumannii (strain SDF).